The chain runs to 526 residues: Peptide chain release factor 3 (526 aa).

One can recognise a tr-type G domain in the interval 9-277 (NKRRTFAIIS…DFVEYAPGPQ (269 aa)). GTP is bound by residues 18 to 25 (SHPDAGKT), 86 to 90 (DTPGH), and 140 to 143 (NKLD).

It belongs to the TRAFAC class translation factor GTPase superfamily. Classic translation factor GTPase family. PrfC subfamily.

Its subcellular location is the cytoplasm. In terms of biological role, increases the formation of ribosomal termination complexes and stimulates activities of RF-1 and RF-2. It binds guanine nucleotides and has strong preference for UGA stop codons. It may interact directly with the ribosome. The stimulation of RF-1 and RF-2 is significantly reduced by GTP and GDP, but not by GMP. In Legionella pneumophila (strain Lens), this protein is Peptide chain release factor 3.